A 274-amino-acid chain; its full sequence is 2,3,4,5-tetrahydropyridine-2,6-dicarboxylate N-succinyltransferase (274 aa).

2 residues coordinate substrate: Arg104 and Asp141.

This sequence belongs to the transferase hexapeptide repeat family. Homotrimer.

The protein resides in the cytoplasm. The enzyme catalyses (S)-2,3,4,5-tetrahydrodipicolinate + succinyl-CoA + H2O = (S)-2-succinylamino-6-oxoheptanedioate + CoA. It participates in amino-acid biosynthesis; L-lysine biosynthesis via DAP pathway; LL-2,6-diaminopimelate from (S)-tetrahydrodipicolinate (succinylase route): step 1/3. This chain is 2,3,4,5-tetrahydropyridine-2,6-dicarboxylate N-succinyltransferase, found in Idiomarina loihiensis (strain ATCC BAA-735 / DSM 15497 / L2-TR).